The chain runs to 755 residues: Tryptophan 2-monooxygenase (755 aa).

Residues Ser247, Glu267, Lys275, and Arg295 each contribute to the FMN site. Arg295 provides a ligand contact to substrate.

It belongs to the tryptophan 2-monooxygenase family. The cofactor is FMN.

The catalysed reaction is L-tryptophan + O2 = indole-3-acetamide + CO2 + H2O. It functions in the pathway plant hormone metabolism; auxin biosynthesis. The protein is Tryptophan 2-monooxygenase (tms1) of Rhizobium radiobacter (Agrobacterium tumefaciens).